A 585-amino-acid polypeptide reads, in one-letter code: tRNA-guanine(15) transglycosylase (585 aa).

D95 serves as the catalytic Nucleophile. Substrate is bound by residues D130 and A196. Zn(2+)-binding residues include C279, C281, and C284. Residues V507 to E582 form the PUA domain.

Belongs to the archaeosine tRNA-ribosyltransferase family. Zn(2+) is required as a cofactor.

It catalyses the reaction guanosine(15) in tRNA + 7-cyano-7-deazaguanine = 7-cyano-7-carbaguanosine(15) in tRNA + guanine. Its pathway is tRNA modification; archaeosine-tRNA biosynthesis. In terms of biological role, exchanges the guanine residue with 7-cyano-7-deazaguanine (preQ0) at position 15 in the dihydrouridine loop (D-loop) of archaeal tRNAs. In Pyrococcus furiosus (strain ATCC 43587 / DSM 3638 / JCM 8422 / Vc1), this protein is tRNA-guanine(15) transglycosylase.